Here is a 125-residue protein sequence, read N- to C-terminus: MPHSSDSSDSSFSRSPPPGKQDSSDDVRKVQRREKNRIAAQKSRQRQTQKADTLHLESEDLEKQNAALRKEIKQLTEEMKYFTSVLSSHEPLCSVLAPGAPSPPEVVYSTHAFHQPHVSSPRFQP.

Residues 1 to 14 (MPHSSDSSDSSFSR) are compositionally biased toward low complexity. A disordered region spans residues 1 to 58 (MPHSSDSSDSSFSRSPPPGKQDSSDDVRKVQRREKNRIAAQKSRQRQTQKADTLHLES). The 64-residue stretch at 26 to 89 (DVRKVQRREK…KYFTSVLSSH (64 aa)) folds into the bZIP domain. The interval 28-50 (RKVQRREKNRIAAQKSRQRQTQK) is basic motif. Serine 43 carries the phosphoserine modification. A Phosphothreonine modification is found at threonine 48. The tract at residues 54 to 75 (LHLESEDLEKQNAALRKEIKQL) is leucine-zipper.

This sequence belongs to the bZIP family. As to quaternary structure, heterodimer; mainly heterodimerizes with JUNB. The BATF-JUNB heterodimer interacts with IRF4 and IRF8. Interacts (via bZIP domain) with IRF4 and IRF8; the interaction is direct. Also forms heterodimers with JUN and JUND. Interacts with IFI35. Phosphorylated on serine and threonine residues and at least one tyrosine residue. Phosphorylation at Ser-43 inhibit DNA binding activity and transforms it as a negative regulator of AP-1 mediated transcription.

The protein localises to the nucleus. It is found in the cytoplasm. Its function is as follows. AP-1 family transcription factor that controls the differentiation of lineage-specific cells in the immune system: specifically mediates the differentiation of T-helper 17 cells (Th17), follicular T-helper cells (TfH), CD8(+) dendritic cells and class-switch recombination (CSR) in B-cells. Acts via the formation of a heterodimer with JUNB that recognizes and binds DNA sequence 5'-TGA[CG]TCA-3'. The BATF-JUNB heterodimer also forms a complex with IRF4 (or IRF8) in immune cells, leading to recognition of AICE sequence (5'-TGAnTCA/GAAA-3'), an immune-specific regulatory element, followed by cooperative binding of BATF and IRF4 (or IRF8) and activation of genes. Controls differentiation of T-helper cells producing interleukin-17 (Th17 cells) by binding to Th17-associated gene promoters: regulates expression of the transcription factor RORC itself and RORC target genes such as IL17 (IL17A or IL17B). Also involved in differentiation of follicular T-helper cells (TfH) by directing expression of BCL6 and MAF. In B-cells, involved in class-switch recombination (CSR) by controlling the expression of both AICDA and of germline transcripts of the intervening heavy-chain region and constant heavy-chain region (I(H)-C(H)). Following infection, can participate in CD8(+) dendritic cell differentiation via interaction with IRF4 and IRF8 to mediate cooperative gene activation. Regulates effector CD8(+) T-cell differentiation by regulating expression of SIRT1. Following DNA damage, part of a differentiation checkpoint that limits self-renewal of hematopoietic stem cells (HSCs): up-regulated by STAT3, leading to differentiation of HSCs, thereby restricting self-renewal of HSCs. This chain is Basic leucine zipper transcriptional factor ATF-like (BATF), found in Bos taurus (Bovine).